Here is a 171-residue protein sequence, read N- to C-terminus: 3-hydroxydecanoyl-[acyl-carrier-protein] dehydratase (171 aa).

H70 is an active-site residue.

Belongs to the thioester dehydratase family. FabA subfamily. As to quaternary structure, homodimer.

The protein resides in the cytoplasm. The catalysed reaction is a (3R)-hydroxyacyl-[ACP] = a (2E)-enoyl-[ACP] + H2O. It catalyses the reaction (3R)-hydroxydecanoyl-[ACP] = (2E)-decenoyl-[ACP] + H2O. It carries out the reaction (2E)-decenoyl-[ACP] = (3Z)-decenoyl-[ACP]. It participates in lipid metabolism; fatty acid biosynthesis. In terms of biological role, necessary for the introduction of cis unsaturation into fatty acids. Catalyzes the dehydration of (3R)-3-hydroxydecanoyl-ACP to E-(2)-decenoyl-ACP and then its isomerization to Z-(3)-decenoyl-ACP. Can catalyze the dehydratase reaction for beta-hydroxyacyl-ACPs with saturated chain lengths up to 16:0, being most active on intermediate chain length. The polypeptide is 3-hydroxydecanoyl-[acyl-carrier-protein] dehydratase (Pseudomonas aeruginosa (strain LESB58)).